Here is a 60-residue protein sequence, read N- to C-terminus: Large ribosomal subunit protein uL30 (60 aa).

Belongs to the universal ribosomal protein uL30 family. In terms of assembly, part of the 50S ribosomal subunit.

This is Large ribosomal subunit protein uL30 from Pediococcus pentosaceus (strain ATCC 25745 / CCUG 21536 / LMG 10740 / 183-1w).